A 450-amino-acid polypeptide reads, in one-letter code: 23S rRNA (uracil(1939)-C(5))-methyltransferase RlmD (450 aa).

The 59-residue stretch at 12–70 (SKQLSAKLSLSVNQLDHLGAGIAQHQGKVVFIPGALPDETVTVQLTEQKKNYARAKLIK) folds into the TRAM domain. [4Fe-4S] cluster is bound by residues Cys83, Cys89, Cys92, and Cys171. Residues Gln283, Phe312, Asn317, Glu333, Asp360, and Asp380 each coordinate S-adenosyl-L-methionine. Cys406 acts as the Nucleophile in catalysis.

It belongs to the class I-like SAM-binding methyltransferase superfamily. RNA M5U methyltransferase family. RlmD subfamily.

It catalyses the reaction uridine(1939) in 23S rRNA + S-adenosyl-L-methionine = 5-methyluridine(1939) in 23S rRNA + S-adenosyl-L-homocysteine + H(+). Its function is as follows. Catalyzes the formation of 5-methyl-uridine at position 1939 (m5U1939) in 23S rRNA. The protein is 23S rRNA (uracil(1939)-C(5))-methyltransferase RlmD of Shewanella baltica (strain OS195).